Reading from the N-terminus, the 473-residue chain is Photosystem II CP43 reaction center protein (473 aa).

The propeptide occupies 1-14 (MKTLYSLRRFYHVE). Threonine 15 is modified (N-acetylthreonine). Residue threonine 15 is modified to Phosphothreonine. Transmembrane regions (helical) follow at residues 69–93 (LFEV…PHLA), 134–155 (LLGP…KDRN), 178–200 (KALY…RKIT), 255–275 (KPFA…LSYS), and 291–312 (WFNN…ASQA). Glutamate 367 provides a ligand contact to [CaMn4O5] cluster. A helical membrane pass occupies residues 447–471 (RARAAAAGFEKGIDRDFEPVLSMTP).

The protein belongs to the PsbB/PsbC family. PsbC subfamily. As to quaternary structure, PSII is composed of 1 copy each of membrane proteins PsbA, PsbB, PsbC, PsbD, PsbE, PsbF, PsbH, PsbI, PsbJ, PsbK, PsbL, PsbM, PsbT, PsbX, PsbY, PsbZ, Psb30/Ycf12, at least 3 peripheral proteins of the oxygen-evolving complex and a large number of cofactors. It forms dimeric complexes. It depends on Binds multiple chlorophylls and provides some of the ligands for the Ca-4Mn-5O cluster of the oxygen-evolving complex. It may also provide a ligand for a Cl- that is required for oxygen evolution. PSII binds additional chlorophylls, carotenoids and specific lipids. as a cofactor.

The protein localises to the plastid. It is found in the chloroplast thylakoid membrane. Its function is as follows. One of the components of the core complex of photosystem II (PSII). It binds chlorophyll and helps catalyze the primary light-induced photochemical processes of PSII. PSII is a light-driven water:plastoquinone oxidoreductase, using light energy to abstract electrons from H(2)O, generating O(2) and a proton gradient subsequently used for ATP formation. In Coffea arabica (Arabian coffee), this protein is Photosystem II CP43 reaction center protein.